We begin with the raw amino-acid sequence, 158 residues long: Histone H2B.1 (158 aa).

An N6-acetyllysine mark is found at K7 and K25. 2 disordered regions span residues 26 to 45 (AAAG…PKKG) and 135 to 158 (VHNF…GQQT). Residues 135–144 (VHNFESETSK) are compositionally biased toward basic and acidic residues. The span at 147–158 (SQGRKRGRGQQT) shows a compositional bias: basic residues.

The protein belongs to the histone H2B family. As to quaternary structure, the nucleosome is a histone octamer containing two molecules each of H2A, H2B, H3 and H4 assembled in one H3-H4 heterotetramer and two H2A-H2B heterodimers. The octamer wraps approximately 147 bp of DNA. Post-translationally, can be acetylated to form H2BK6ac and H2BK33ac. As to expression, expressed in the generative cell within the bicellular pollen. Not detected in other reproductive or vegetative tissues.

The protein localises to the nucleus. Its subcellular location is the chromosome. Functionally, core component of nucleosome. Nucleosomes wrap and compact DNA into chromatin, limiting DNA accessibility to the cellular machineries which require DNA as a template. Histones thereby play a central role in transcription regulation, DNA repair, DNA replication and chromosomal stability. DNA accessibility is regulated via a complex set of post-translational modifications of histones, also called histone code, and nucleosome remodeling. This Lilium longiflorum (Trumpet lily) protein is Histone H2B.1.